The chain runs to 150 residues: Large ribosomal subunit protein uL15 (150 aa).

Residues 12–43 (AKKRKKRVGCGESSGHGKTSGRGHKGQKARAG) form a disordered region. Over residues 30–39 (TSGRGHKGQK) the composition is skewed to basic residues.

Belongs to the universal ribosomal protein uL15 family. In terms of assembly, part of the 50S ribosomal subunit.

Its function is as follows. Binds to the 23S rRNA. This Methylacidiphilum infernorum (isolate V4) (Methylokorus infernorum (strain V4)) protein is Large ribosomal subunit protein uL15.